The sequence spans 287 residues: Phosphoribosylaminoimidazole-succinocarboxamide synthase (287 aa).

Belongs to the SAICAR synthetase family.

It catalyses the reaction 5-amino-1-(5-phospho-D-ribosyl)imidazole-4-carboxylate + L-aspartate + ATP = (2S)-2-[5-amino-1-(5-phospho-beta-D-ribosyl)imidazole-4-carboxamido]succinate + ADP + phosphate + 2 H(+). It participates in purine metabolism; IMP biosynthesis via de novo pathway; 5-amino-1-(5-phospho-D-ribosyl)imidazole-4-carboxamide from 5-amino-1-(5-phospho-D-ribosyl)imidazole-4-carboxylate: step 1/2. The chain is Phosphoribosylaminoimidazole-succinocarboxamide synthase from Neisseria meningitidis serogroup B (strain ATCC BAA-335 / MC58).